The primary structure comprises 194 residues: HTH-type nicotine-responsive transcriptional repressor HdnoR (194 aa).

The HTH tetR-type domain occupies 6–66 (VDRRQQLIDA…AAAAELLQQL (61 aa)). Positions 29–48 (SLRTIASEAKASLAAVHVCF) form a DNA-binding region, H-T-H motif.

In terms of assembly, homodimer.

Its activity is regulated as follows. 6-hydroxy-D-nicotine and 6-hydroxy-L-nicotine prevent HdnoR from binding to the IR1 DNA. Both 6-hydroxy-nicotine enantiomers prevent DNA-protein complex formation at micromolar concentrations, with the D-enantiomer being twice as potent as the L-enantiomer. A thousand-fold higher L-nicotine concentration is required to elicit a similar effect. Represses expression of the 6-hydroxy-D-nicotine oxidase (6-hdno). Acts by binding to a gene operator site consisting of two inverted repeats, IR1 (covering the 6-hdno promoter region) and IR2 (situated upstream from the 6-hdno promoter). Binding to one site may stimulate binding of the protein to the second site. The chain is HTH-type nicotine-responsive transcriptional repressor HdnoR from Paenarthrobacter nicotinovorans (Arthrobacter nicotinovorans).